Reading from the N-terminus, the 213-residue chain is Uridine kinase (213 aa).

12–19 (GGSCSGKT) is a binding site for ATP.

The protein belongs to the uridine kinase family.

It localises to the cytoplasm. It carries out the reaction uridine + ATP = UMP + ADP + H(+). The enzyme catalyses cytidine + ATP = CMP + ADP + H(+). It functions in the pathway pyrimidine metabolism; CTP biosynthesis via salvage pathway; CTP from cytidine: step 1/3. The protein operates within pyrimidine metabolism; UMP biosynthesis via salvage pathway; UMP from uridine: step 1/1. The chain is Uridine kinase (udk) from Mycoplasma genitalium (strain ATCC 33530 / DSM 19775 / NCTC 10195 / G37) (Mycoplasmoides genitalium).